Reading from the N-terminus, the 1059-residue chain is Zinc finger protein 628 (1059 aa).

6 C2H2-type zinc fingers span residues 36–58 (YECG…QRTH), 64–86 (YKCP…QRGH), 92–114 (YQCP…RSVH), 120–142 (FICG…LRQH), 148–170 (YPCP…RHVH), and 176–198 (YTCG…QRVH). Position 199 is a phosphothreonine (Thr199). Residues 204 to 226 (FRCPLCPKTFTHSSNLLLHQRTH) form a C2H2-type 7 zinc finger. 3 disordered regions span residues 226 to 247 (HGAA…REPG), 260 to 280 (LQPH…PVVP), and 312 to 351 (EHQP…PAAA). Residues 228–237 (AAPAPGTASA) show a composition bias toward low complexity. The span at 263 to 279 (HSPPAPPAPPPPPPPVV) shows a compositional bias: pro residues. Positions 323-335 (PQPQEAPAEAPKA) are enriched in low complexity. Over residues 336–351 (DQPPSPLPQPPPPAAA) the composition is skewed to pro residues. C2H2-type zinc fingers lie at residues 356–378 (FACL…QHSH), 386–408 (FRCG…QQCH), 454–476 (YKCA…LRDH), 482–504 (YQCG…QRVH), 510–532 (FTCG…LRLH), 538–560 (YACG…RHVH), and 566–588 (HACG…QRVH). Thr589 carries the post-translational modification Phosphothreonine. C2H2-type zinc fingers lie at residues 594–616 (FRCP…QRTH) and 622–644 (FTCP…LRTH). The span at 644–658 (HAPANTPPSTTAPAA) shows a compositional bias: low complexity. A disordered region spans residues 644–674 (HAPANTPPSTTAPAAGPQPPAPLAAARAPPA). A run of 4 repeats spans residues 818-831 (VQLQ…EVTT), 832-842 (VQLQPAQEVTT), 843-853 (VQLQPAQEVTT), and 854-864 (VQLQPAQEVTT). The interval 818–864 (VQLQPLRPAPEVTTVQLQPAQEVTTVQLQPAQEVTTVQLQPAQEVTT) is 4 X approximate tandem repeats. Residues 943-1059 (DGEQTRLCVQ…LPAVQLVHTF (117 aa)) form an interaction with TAF4B region.

As to quaternary structure, interacts with TAF4B.

Its subcellular location is the nucleus. Transcriptional activator. Binds DNA on GT-box consensus sequence 5'-TTGGTT-3'. Plays a role in spermiogenesis. The chain is Zinc finger protein 628 (ZNF628) from Homo sapiens (Human).